The primary structure comprises 71 residues: Biotinylated protein TB7.3 (71 aa).

A Biotinyl-binding domain is found at 2 to 71 (AEDVRAEIVA…QAGDLIAVIS (70 aa)). An N6-biotinyllysine modification is found at K37.

The polypeptide is Biotinylated protein TB7.3 (Mycobacterium bovis (strain ATCC BAA-935 / AF2122/97)).